The chain runs to 609 residues: Interleukin-1 receptor-associated kinase 3 (609 aa).

Positions 41–106 (WRGLAERLSN…RAIHLIINYG (66 aa)) constitute a Death domain. Position 110 is a phosphothreonine (threonine 110). The 286-residue stretch at 178-463 (FHKDFLIGEG…SSLESTQPSL (286 aa)) folds into the Protein kinase domain. ATP-binding positions include 184–192 (IGEGEIFEV), lysine 205, 308–311 (SSAN), and aspartate 324. Serine 480 carries the post-translational modification Phosphoserine.

The protein belongs to the protein kinase superfamily. TKL Ser/Thr protein kinase family. Pelle subfamily. Monomer. Homodimer. May interact with IRAK4 (when phosphorylated). Interacts (when phosphorylated at Thr-110) with PIN1 (via WW domain) in response to IL33-mediated (but not TLR4 ligand LPS) dendritic cell stimulation. Expressed in inflamed lung macrophages (at protein level). Expressed in dendritic cells (at protein level). Highly expressed in liver and thymus and at lower levels in heart, brain, spleen and kidney.

The protein localises to the cytoplasm. The protein resides in the nucleus. Putative inactive protein kinase which regulates signaling downstream of immune receptors including IL1R and Toll-like receptors. Inhibits dissociation of IRAK1 and IRAK4 from the Toll-like receptor signaling complex by either inhibiting the phosphorylation of IRAK1 and IRAK4 or stabilizing the receptor complex. Upon IL33-induced lung inflammation, positively regulates expression of IL6, CSF3, CXCL2 and CCL5 mRNAs in dendritic cells. The polypeptide is Interleukin-1 receptor-associated kinase 3 (Mus musculus (Mouse)).